Consider the following 708-residue polypeptide: Ubiquitin thioesterase ZRANB1 (708 aa).

The RanBP2-type 1 zinc finger occupies 3 to 33; that stretch reads ERGIKWACEYCTYENWPSAIKCTMCRAQRPS. 4 residues coordinate Zn(2+): Cys-10, Cys-13, Cys-24, and Cys-27. The disordered stretch occupies residues 38–73; sequence TEDPFKSGSSDVGRDWDPSSTEGGSSPLICPDSSAR. RanBP2-type zinc fingers lie at residues 84–113 and 149–178; these read NANKWSCHMCTYLNWPRAIRCTQCLSQRRT and RTQHWTCSVCTYENWAKAKRCVVCDHPRPN. The Zn(2+) site is built by Cys-90, Cys-93, Cys-104, Cys-107, Cys-155, Cys-158, Cys-169, and Cys-172. The interval 200 to 225 is disordered; that stretch reads RARWRGSCSSGNSQRRSPPATKRDSE. A compositionally biased stretch (polar residues) spans 206 to 215; sequence SCSSGNSQRR. ANK repeat units lie at residues 260–290 and 313–340; these read KKTDWLFLNACVGVVEGDLAAIEAYKSSGGD and YTLVHLAIRFQRQDMLAILLTEVSQQAA. Residues 392-641 form a TRAF-binding region; that stretch reads PTVQEKLFDE…LSAQELGNEE (250 aa). Residues 432-592 enclose the OTU domain; the sequence is LYALWNRTAG…RGHFSALVAM (161 aa). Cys-443 serves as the catalytic Nucleophile. Catalysis depends on His-585, which acts as the Proton acceptor.

It belongs to the peptidase C64 family. In terms of assembly, interacts with TRAF6. Interacts with APC. As to expression, widely expressed.

It localises to the cytoplasm. The protein resides in the nucleus. It catalyses the reaction Thiol-dependent hydrolysis of ester, thioester, amide, peptide and isopeptide bonds formed by the C-terminal Gly of ubiquitin (a 76-residue protein attached to proteins as an intracellular targeting signal).. Its function is as follows. Ubiquitin thioesterase, which specifically hydrolyzes 'Lys-29'-linked and 'Lys-33'-linked diubiquitin. Also cleaves 'Lys-63'-linked chains, but with 40-fold less efficiency compared to 'Lys-29'-linked ones. Positive regulator of the Wnt signaling pathway that deubiquitinates APC protein, a negative regulator of Wnt-mediated transcription. Acts as a regulator of autophagy by mediating deubiquitination of PIK3C3/VPS34, thereby promoting autophagosome maturation. Plays a role in the regulation of cell morphology and cytoskeletal organization. Required in the stress fiber dynamics and cell migration. The protein is Ubiquitin thioesterase ZRANB1 of Homo sapiens (Human).